The primary structure comprises 179 residues: Large ribosomal subunit protein uL5 (179 aa).

Belongs to the universal ribosomal protein uL5 family. Part of the 50S ribosomal subunit; part of the 5S rRNA/L5/L18/L25 subcomplex. Contacts the 5S rRNA and the P site tRNA. Forms a bridge to the 30S subunit in the 70S ribosome.

Functionally, this is one of the proteins that bind and probably mediate the attachment of the 5S RNA into the large ribosomal subunit, where it forms part of the central protuberance. In the 70S ribosome it contacts protein S13 of the 30S subunit (bridge B1b), connecting the 2 subunits; this bridge is implicated in subunit movement. Contacts the P site tRNA; the 5S rRNA and some of its associated proteins might help stabilize positioning of ribosome-bound tRNAs. In Enterococcus faecalis (strain ATCC 700802 / V583), this protein is Large ribosomal subunit protein uL5.